We begin with the raw amino-acid sequence, 888 residues long: Bifunctional uridylyltransferase/uridylyl-removing enzyme (888 aa).

Positions 1 to 338 (MIITSPLLDY…LPNYERKIEE (338 aa)) are uridylyltransferase. The segment at 182 to 204 (EQAKRHAQHNNTESNLEPDIKNA) is disordered. The uridylyl-removing stretch occupies residues 339-699 (INENFKLVDG…AHRQSAQDAV (361 aa)). Residues 457–579 (VDAHTLLLIR…LGDMEHLDYL (123 aa)) enclose the HD domain. 2 consecutive ACT domains span residues 700–781 (QIFI…GLMQ) and 809–887 (MVEI…IVSQ).

It belongs to the GlnD family. Requires Mg(2+) as cofactor.

The catalysed reaction is [protein-PII]-L-tyrosine + UTP = [protein-PII]-uridylyl-L-tyrosine + diphosphate. It catalyses the reaction [protein-PII]-uridylyl-L-tyrosine + H2O = [protein-PII]-L-tyrosine + UMP + H(+). Uridylyltransferase (UTase) activity is inhibited by glutamine, while glutamine activates uridylyl-removing (UR) activity. Modifies, by uridylylation and deuridylylation, the PII regulatory proteins (GlnB and homologs), in response to the nitrogen status of the cell that GlnD senses through the glutamine level. Under low glutamine levels, catalyzes the conversion of the PII proteins and UTP to PII-UMP and PPi, while under higher glutamine levels, GlnD hydrolyzes PII-UMP to PII and UMP (deuridylylation). Thus, controls uridylylation state and activity of the PII proteins, and plays an important role in the regulation of nitrogen assimilation and metabolism. The polypeptide is Bifunctional uridylyltransferase/uridylyl-removing enzyme (Acinetobacter baylyi (strain ATCC 33305 / BD413 / ADP1)).